Consider the following 225-residue polypeptide: Ribonuclease 3 (225 aa).

One can recognise an RNase III domain in the interval 7-129; the sequence is LPRLGRILGY…IIGAIYLDAD (123 aa). Residue E42 coordinates Mg(2+). D46 is a catalytic residue. Mg(2+) is bound by residues D115 and E118. Residue E118 is part of the active site. One can recognise a DRBM domain in the interval 155 to 225; sequence DPKTLLQEHL…AAEVLERIKK (71 aa).

Belongs to the ribonuclease III family. As to quaternary structure, homodimer. Mg(2+) is required as a cofactor.

Its subcellular location is the cytoplasm. It carries out the reaction Endonucleolytic cleavage to 5'-phosphomonoester.. Digests double-stranded RNA. Involved in the processing of primary rRNA transcript to yield the immediate precursors to the large and small rRNAs (23S and 16S). Processes some mRNAs, and tRNAs when they are encoded in the rRNA operon. Processes pre-crRNA and tracrRNA of type II CRISPR loci if present in the organism. The polypeptide is Ribonuclease 3 (Shewanella loihica (strain ATCC BAA-1088 / PV-4)).